A 360-amino-acid polypeptide reads, in one-letter code: DNA replication and repair protein RecF (360 aa).

G30–T37 lines the ATP pocket.

Belongs to the RecF family.

Its subcellular location is the cytoplasm. The RecF protein is involved in DNA metabolism; it is required for DNA replication and normal SOS inducibility. RecF binds preferentially to single-stranded, linear DNA. It also seems to bind ATP. This Shewanella baltica (strain OS185) protein is DNA replication and repair protein RecF.